A 390-amino-acid polypeptide reads, in one-letter code: Enoyl-[acyl-carrier-protein] reductase [NADH], chloroplastic (390 aa).

The N-terminal 74 residues, 1 to 74, are a transit peptide targeting the chloroplast; that stretch reads MAATAASSLQ…CKRPFSFSTR (74 aa). Residues Leu53 and Asn170 each coordinate NADP(+). Ser239 serves as the catalytic Proton donor. Positions 282 and 314 each coordinate NADP(+). Lys282 (lowers pKa of active site Tyr) is an active-site residue.

The protein belongs to the short-chain dehydrogenases/reductases (SDR) family. FabI subfamily. In terms of assembly, homotetramer. Expressed in flowers and siliques and at lower levels in roots and leaves (at protein level).

It localises to the plastid. The protein localises to the chloroplast. The enzyme catalyses a 2,3-saturated acyl-[ACP] + NAD(+) = a (2E)-enoyl-[ACP] + NADH + H(+). It functions in the pathway lipid metabolism; fatty acid biosynthesis. Its activity is regulated as follows. Inhibited by the phytotoxin cyperin and the synthetic antimicrobial compound triclosan. Functionally, catalyzes the NAD-dependent reduction of a carbon-carbon double bond in an enoyl moiety that is covalently linked to an acyl carrier protein (ACP). Catalyzes the last reduction step in the de novo synthesis cycle of fatty acids. Involved in the elongation cycle of fatty acids which are used in lipid metabolism. Required for normal plant growth. This Arabidopsis thaliana (Mouse-ear cress) protein is Enoyl-[acyl-carrier-protein] reductase [NADH], chloroplastic (MOD1).